Here is a 177-residue protein sequence, read N- to C-terminus: ATP synthase subunit delta (177 aa).

The protein belongs to the ATPase delta chain family. F-type ATPases have 2 components, F(1) - the catalytic core - and F(0) - the membrane proton channel. F(1) has five subunits: alpha(3), beta(3), gamma(1), delta(1), epsilon(1). F(0) has three main subunits: a(1), b(2) and c(10-14). The alpha and beta chains form an alternating ring which encloses part of the gamma chain. F(1) is attached to F(0) by a central stalk formed by the gamma and epsilon chains, while a peripheral stalk is formed by the delta and b chains.

The protein localises to the cell inner membrane. F(1)F(0) ATP synthase produces ATP from ADP in the presence of a proton or sodium gradient. F-type ATPases consist of two structural domains, F(1) containing the extramembraneous catalytic core and F(0) containing the membrane proton channel, linked together by a central stalk and a peripheral stalk. During catalysis, ATP synthesis in the catalytic domain of F(1) is coupled via a rotary mechanism of the central stalk subunits to proton translocation. Its function is as follows. This protein is part of the stalk that links CF(0) to CF(1). It either transmits conformational changes from CF(0) to CF(1) or is implicated in proton conduction. The polypeptide is ATP synthase subunit delta (Klebsiella pneumoniae subsp. pneumoniae (strain ATCC 700721 / MGH 78578)).